We begin with the raw amino-acid sequence, 202 residues long: 7-cyano-7-deazaguanine synthase 1 (202 aa).

Residue Met7–Ala17 participates in ATP binding. Zn(2+)-binding residues include Cys166, Cys174, Cys177, and Cys180.

Belongs to the QueC family. Zn(2+) serves as cofactor.

The enzyme catalyses 7-carboxy-7-deazaguanine + NH4(+) + ATP = 7-cyano-7-deazaguanine + ADP + phosphate + H2O + H(+). It functions in the pathway purine metabolism; 7-cyano-7-deazaguanine biosynthesis. Catalyzes the ATP-dependent conversion of 7-carboxy-7-deazaguanine (CDG) to 7-cyano-7-deazaguanine (preQ(0)). The polypeptide is 7-cyano-7-deazaguanine synthase 1 (queC1) (Sulfurisphaera tokodaii (strain DSM 16993 / JCM 10545 / NBRC 100140 / 7) (Sulfolobus tokodaii)).